The following is a 490-amino-acid chain: ATP synthase subunit beta (490 aa).

175 to 182 (GGAGVGKT) is a binding site for ATP.

The protein belongs to the ATPase alpha/beta chains family. In terms of assembly, F-type ATPases have 2 components, CF(1) - the catalytic core - and CF(0) - the membrane proton channel. CF(1) has five subunits: alpha(3), beta(3), gamma(1), delta(1), epsilon(1). CF(0) has three main subunits: a(1), b(2) and c(9-12). The alpha and beta chains form an alternating ring which encloses part of the gamma chain. CF(1) is attached to CF(0) by a central stalk formed by the gamma and epsilon chains, while a peripheral stalk is formed by the delta and b chains.

The protein localises to the cell membrane. The enzyme catalyses ATP + H2O + 4 H(+)(in) = ADP + phosphate + 5 H(+)(out). Functionally, produces ATP from ADP in the presence of a proton gradient across the membrane. The catalytic sites are hosted primarily by the beta subunits. The polypeptide is ATP synthase subunit beta (Acidothermus cellulolyticus (strain ATCC 43068 / DSM 8971 / 11B)).